We begin with the raw amino-acid sequence, 420 residues long: D-tagatose-1,6-bisphosphate aldolase subunit GatZ (420 aa).

The protein belongs to the GatZ/KbaZ family. GatZ subfamily. In terms of assembly, forms a complex with GatY.

It participates in carbohydrate metabolism; D-tagatose 6-phosphate degradation; D-glyceraldehyde 3-phosphate and glycerone phosphate from D-tagatose 6-phosphate: step 2/2. In terms of biological role, component of the tagatose-1,6-bisphosphate aldolase GatYZ that is required for full activity and stability of the Y subunit. Could have a chaperone-like function for the proper and stable folding of GatY. When expressed alone, GatZ does not show any aldolase activity. Is involved in the catabolism of galactitol. This Escherichia coli O45:K1 (strain S88 / ExPEC) protein is D-tagatose-1,6-bisphosphate aldolase subunit GatZ.